We begin with the raw amino-acid sequence, 362 residues long: Protein RecA (362 aa).

77 to 84 contacts ATP; sequence GPESSGKT.

The protein belongs to the RecA family.

It is found in the cytoplasm. Can catalyze the hydrolysis of ATP in the presence of single-stranded DNA, the ATP-dependent uptake of single-stranded DNA by duplex DNA, and the ATP-dependent hybridization of homologous single-stranded DNAs. It interacts with LexA causing its activation and leading to its autocatalytic cleavage. The chain is Protein RecA from Allorhizobium ampelinum (strain ATCC BAA-846 / DSM 112012 / S4) (Agrobacterium vitis (strain S4)).